The following is a 260-amino-acid chain: Hydroxyethylthiazole kinase 1 (260 aa).

Methionine 39 is a binding site for substrate. ATP is bound by residues arginine 115 and threonine 160. Glycine 187 is a substrate binding site.

The protein belongs to the Thz kinase family. It depends on Mg(2+) as a cofactor.

It catalyses the reaction 5-(2-hydroxyethyl)-4-methylthiazole + ATP = 4-methyl-5-(2-phosphooxyethyl)-thiazole + ADP + H(+). It participates in cofactor biosynthesis; thiamine diphosphate biosynthesis; 4-methyl-5-(2-phosphoethyl)-thiazole from 5-(2-hydroxyethyl)-4-methylthiazole: step 1/1. Its function is as follows. Catalyzes the phosphorylation of the hydroxyl group of 4-methyl-5-beta-hydroxyethylthiazole (THZ). This Streptococcus pneumoniae (strain ATCC 700669 / Spain 23F-1) protein is Hydroxyethylthiazole kinase 1.